We begin with the raw amino-acid sequence, 163 residues long: Deoxyuridine 5'-triphosphate nucleotidohydrolase (163 aa).

Substrate contacts are provided by residues 78-80, N91, and 95-97; these read RSG and TVD. Residues 140-151 are compositionally biased toward basic and acidic residues; the sequence is ERESLNETERGD. Residues 140-163 are disordered; that stretch reads ERESLNETERGDGGFGHTGVNSQP.

This sequence belongs to the dUTPase family. Mg(2+) is required as a cofactor.

It carries out the reaction dUTP + H2O = dUMP + diphosphate + H(+). It participates in pyrimidine metabolism; dUMP biosynthesis; dUMP from dCTP (dUTP route): step 2/2. Functionally, this enzyme is involved in nucleotide metabolism: it produces dUMP, the immediate precursor of thymidine nucleotides and it decreases the intracellular concentration of dUTP so that uracil cannot be incorporated into DNA. This chain is Deoxyuridine 5'-triphosphate nucleotidohydrolase, found in Heliobacterium modesticaldum (strain ATCC 51547 / Ice1).